We begin with the raw amino-acid sequence, 80 residues long: Peptide LaIT2 (80 aa).

Residues M1–C21 form the signal peptide. In terms of domain architecture, BetaSPN-type CS-alpha/beta spans Q49 to S80. 3 disulfides stabilise this stretch: C52-C72, C59-C77, and C63-C79.

It belongs to the long chain scorpion toxin family. Class 2 subfamily. As to expression, expressed by the venom gland.

It is found in the secreted. In terms of biological role, dual-function toxin that acts both as an insecticidal and an antimicrobial peptide. May inhibit voltage-gated potassium channels (Kv). This amphipathic peptide causes significant antimicrobial activity against E.coli (MIC=7 uM) but does not show any activity against S.aureus even at high concentration. In vivo, causes paralysis or death to crickets. This Liocheles australasiae (Dwarf wood scorpion) protein is Peptide LaIT2.